Consider the following 265-residue polypeptide: Dehydrin COR47 (265 aa).

The segment covering 1–14 has biased composition (basic and acidic residues); it reads MAEEYKNNVPEHET. Positions 1–265 are disordered; sequence MAEEYKNNVP…EVKKEKESDD (265 aa). At alanine 2 the chain carries N-acetylalanine. Residues 16 to 28 are compositionally biased toward polar residues; the sequence is TVATEESPATTTE. The span at 29–47 shows a compositional bias: basic and acidic residues; the sequence is VTDRGLFDFLGKKEEEVKP. Residue serine 64 is modified to Phosphoserine. A compositionally biased stretch (basic and acidic residues) spans 69–79; that stretch reads AAEHEEVKENK. Threonine 90 is subject to Phosphothreonine. 2 stretches are compositionally biased toward basic and acidic residues: residues 96–105 and 129–156; these read NKPSVIEKLH and IVEG…KTAE. Repeat unit 1 spans residues 133 to 153; the sequence is EEDKKGLVEKIKEKLPGHHDK. A 3 X 21 AA repeats, Lys-rich region spans residues 133–251; the sequence is EEDKKGLVEK…KEKLPGYHAK (119 aa). Positions 160-172 are enriched in low complexity; that stretch reads PVSTTIPVPVSES. 2 stretches are compositionally biased toward basic and acidic residues: residues 173–204 and 227–265; these read VVEH…KAED and PVEH…ESDD. 2 tandem repeats follow at residues 180–200 and 231–251.

The protein belongs to the plant dehydrin family.

The polypeptide is Dehydrin COR47 (COR47) (Arabidopsis thaliana (Mouse-ear cress)).